The sequence spans 448 residues: Carbon catabolite repressor protein 4 homolog 3 (448 aa).

Over residues 50–67 (SSTSGPSDSNPESSSNRS) the composition is skewed to low complexity. The disordered stretch occupies residues 50–92 (SSTSGPSDSNPESSSNRSYSRRWQNPLPRRQHPDQIPSSQIAR). Mg(2+) is bound at residue Glu162.

This sequence belongs to the CCR4/nocturin family. As to quaternary structure, component of the CCR4-NOT complex, at least composed of CRR4 and CAF1 proteins. It depends on Mg(2+) as a cofactor.

It is found in the nucleus. The protein resides in the cytoplasm. The enzyme catalyses Exonucleolytic cleavage of poly(A) to 5'-AMP.. Its function is as follows. Acts as a catalytic component of the CCR4-NOT core complex, which in the nucleus seems to be a general transcription factor, and in the cytoplasm the major mRNA deadenylase involved in mRNA turnover. The polypeptide is Carbon catabolite repressor protein 4 homolog 3 (CCR4-3) (Arabidopsis thaliana (Mouse-ear cress)).